A 311-amino-acid polypeptide reads, in one-letter code: Ketoisovalerate oxidoreductase subunit VorB (311 aa).

In terms of assembly, heterotetramer of one alpha, one beta, one delta and one gamma chain.

It catalyses the reaction 3-methyl-2-oxobutanoate + 2 oxidized [2Fe-2S]-[ferredoxin] + CoA = 2-methylpropanoyl-CoA + 2 reduced [2Fe-2S]-[ferredoxin] + CO2 + H(+). This Pyrococcus horikoshii (strain ATCC 700860 / DSM 12428 / JCM 9974 / NBRC 100139 / OT-3) protein is Ketoisovalerate oxidoreductase subunit VorB (vorB).